The following is a 193-amino-acid chain: Der GTPase-activating protein YihI (193 aa).

Residues 1–12 (MSAKQPNRKPTG) show a composition bias toward basic residues. Disordered stretches follow at residues 1 to 91 (MSAK…KLVM) and 143 to 193 (IIDN…PKKK). The span at 13–26 (KRKESDASALDGRE) shows a compositional bias: basic and acidic residues. Residues 27 to 36 (RKRAAKRKGL) show a composition bias toward basic residues. Residues 40 to 54 (SRQQAEQSSKNNNGK) show a composition bias toward polar residues. The segment covering 145-160 (DNDDDEEDDGSFDDAS) has biased composition (acidic residues). A compositionally biased stretch (basic and acidic residues) spans 184 to 193 (PEPKPEPKKK).

The protein belongs to the YihI family. As to quaternary structure, interacts with Der.

Its function is as follows. A GTPase-activating protein (GAP) that modifies Der/EngA GTPase function. May play a role in ribosome biogenesis. This Aeromonas salmonicida (strain A449) protein is Der GTPase-activating protein YihI.